We begin with the raw amino-acid sequence, 146 residues long: Holo-[acyl-carrier-protein] synthase (146 aa).

Residues Asp8 and Glu61 each coordinate Mg(2+).

It belongs to the P-Pant transferase superfamily. AcpS family. Mg(2+) serves as cofactor.

The protein localises to the cytoplasm. The enzyme catalyses apo-[ACP] + CoA = holo-[ACP] + adenosine 3',5'-bisphosphate + H(+). Transfers the 4'-phosphopantetheine moiety from coenzyme A to a Ser of acyl-carrier-protein. The protein is Holo-[acyl-carrier-protein] synthase of Rhodopseudomonas palustris (strain TIE-1).